A 447-amino-acid polypeptide reads, in one-letter code: SPARC-related modular calcium-binding protein 2 (447 aa).

An N-terminal signal peptide occupies residues 1–21 (MLPPQLCWLPLLAALLPPVPA). The Kazal-like domain occupies 34–86 (QDKDRDCSLDCPSSPQKPLCASDGRTFLSRCEFQRAKCKDPQLEIAHRGNCKD). Intrachain disulfides connect C40-C71, C44-C64, C53-C84, C90-C113, C124-C131, and C133-C153. A Thyroglobulin type-1 1 domain is found at 87 to 153 (VSRCVAERKY…TAVAHKTPRC (67 aa)). A disordered region spans residues 147–230 (AHKTPRCPGS…QSALEEAKQP (84 aa)). The span at 161 to 172 (VPQREGAGKADD) shows a compositional bias: basic and acidic residues. An N-linked (GlcNAc...) asparagine glycan is attached at N206. A compositionally biased stretch (polar residues) spans 206 to 216 (NKTNKNSASSC). Positions 213-281 (ASSCDQEHQS…TSTRYEQPKC (69 aa)) constitute a Thyroglobulin type-1 2 domain. Disulfide bonds link C216–C240, C251–C258, and C260–C281. A compositionally biased stretch (basic and acidic residues) spans 217–230 (DQEHQSALEEAKQP). 2 consecutive EF-hand domains span residues 347–382 (LEER…LRKK) and 384–419 (KPKK…TREE). The Ca(2+) site is built by D360, N362, S364, D366, E371, D397, N399, D401, S403, and E408. An N-linked (GlcNAc...) asparagine glycan is attached at N362. The segment at 416-447 (TREEGKANTRKRHTPRGNAESSSSNRQPRKQG) is disordered.

Binds various proteins from the extracellular matrix. In terms of processing, N-glycosylated. In terms of tissue distribution, strongly expressed in ovary, followed by heart, muscle, spleen, brain, thymus, lung, liver, kidney, spleen, testis, ovary and skeletal muscle.

It is found in the secreted. The protein localises to the extracellular space. Its subcellular location is the extracellular matrix. It localises to the basement membrane. In terms of biological role, can stimulate endothelial cell proliferation, migration, as well as angiogenesis. Promotes matrix assembly and cell adhesiveness. The protein is SPARC-related modular calcium-binding protein 2 (Smoc2) of Mus musculus (Mouse).